The primary structure comprises 905 residues: Translation initiation factor IF-2 (905 aa).

Over residues 50–62 the composition is skewed to basic and acidic residues; sequence HYEAKGGEDKAAE. Positions 50-306 are disordered; it reads HYEAKGGEDK…QKHEVGGVRL (257 aa). Positions 63–75 are enriched in low complexity; that stretch reads KNAPAATPASASK. Positions 89–125 are enriched in pro residues; that stretch reads GPKPSAAPKPGAAPKPGGAPKPGGAPKPGATPKPGGA. Residues 161–171 are compositionally biased toward low complexity; it reads PFSTGSSSDRP. The span at 233–276 shows a compositional bias: gly residues; the sequence is GSGGGGRGRGGRGGGPGHGGPGHGGFRGRGGRRGGTAGAFGRPG. Basic residues predominate over residues 280–290; that stretch reads RRGKKSKRQKR. Residues 291–302 are compositionally biased toward basic and acidic residues; that stretch reads HEFEEQQKHEVG. The tr-type G domain maps to 401 to 575; it reads KRPPVVTVMG…LTADAALELT (175 aa). The tract at residues 410 to 417 is G1; the sequence is GHVDHGKT. 410–417 serves as a coordination point for GTP; that stretch reads GHVDHGKT. Residues 435-439 form a G2 region; the sequence is GITQG. Positions 460–463 are G3; it reads DTPG. GTP contacts are provided by residues 460–464 and 514–517; these read DTPGH and NKID. A G4 region spans residues 514–517; sequence NKID. The G5 stretch occupies residues 550–552; the sequence is SAK.

This sequence belongs to the TRAFAC class translation factor GTPase superfamily. Classic translation factor GTPase family. IF-2 subfamily.

It localises to the cytoplasm. Its function is as follows. One of the essential components for the initiation of protein synthesis. Protects formylmethionyl-tRNA from spontaneous hydrolysis and promotes its binding to the 30S ribosomal subunits. Also involved in the hydrolysis of GTP during the formation of the 70S ribosomal complex. In Corynebacterium aurimucosum (strain ATCC 700975 / DSM 44827 / CIP 107346 / CN-1) (Corynebacterium nigricans), this protein is Translation initiation factor IF-2.